A 367-amino-acid polypeptide reads, in one-letter code: Peroxisome biogenesis protein 16 (367 aa).

Residues 135–173 form a disordered region; that stretch reads GGETPNEEKDSNQSESQNRAGNSGRNLGPHGLGNQNHHN. Over residues 147–159 the composition is skewed to polar residues; the sequence is QSESQNRAGNSGR. A run of 2 helical transmembrane segments spans residues 237-257 and 264-284; these read ALFA…VLFI and SWIP…LLAN.

This sequence belongs to the peroxin-16 family. Interacts with APEM9 (via both N- and C-terminus). The detection of an additional immunorelated polypeptide of 52 kDa suggests a post-translational modification of PEX16. In terms of tissue distribution, expressed in roots, siliques, seeds, cotyledons, leaves and flowers. Low expression in leaves and roots.

The protein localises to the peroxisome membrane. It localises to the endoplasmic reticulum membrane. Its function is as follows. Involved in the formation of peroxisomes, lipid bodies and protein bodies. The sequence is that of Peroxisome biogenesis protein 16 from Arabidopsis thaliana (Mouse-ear cress).